The following is a 467-amino-acid chain: Glutamate--tRNA ligase (467 aa).

The 'HIGH' region motif lies at 10-20 (PSPTGYLHVGG). Cys99, Cys101, Cys126, and Glu128 together coordinate Zn(2+). Residues 237 to 241 (RLSKR) carry the 'KMSKS' region motif. Lys240 contributes to the ATP binding site.

The protein belongs to the class-I aminoacyl-tRNA synthetase family. Glutamate--tRNA ligase type 1 subfamily. Monomer. Zn(2+) serves as cofactor.

It is found in the cytoplasm. It catalyses the reaction tRNA(Glu) + L-glutamate + ATP = L-glutamyl-tRNA(Glu) + AMP + diphosphate. In terms of biological role, catalyzes the attachment of glutamate to tRNA(Glu) in a two-step reaction: glutamate is first activated by ATP to form Glu-AMP and then transferred to the acceptor end of tRNA(Glu). This chain is Glutamate--tRNA ligase, found in Geotalea uraniireducens (strain Rf4) (Geobacter uraniireducens).